Consider the following 721-residue polypeptide: BBSome complex member BBS2 (721 aa).

A coiled-coil region spans residues 325-369 (RGNLMDTSAEQDLIRELSQKKQNLLLELRNYEENAKAELASPLNE).

In terms of assembly, part of BBSome complex, that contains BBS1, BBS2, BBS4, BBS5, BBS7, BBS8/TTC8, BBS9 and BBIP10. Interacts (via C-terminus) with BBS7. Interacts (via coiled coil domain) with MKKS. Interacts with CCDC28B and ALDOB. Interacts with DLEC1. Widely expressed.

It is found in the cell projection. It localises to the cilium membrane. Its subcellular location is the cytoplasm. The protein localises to the cytoskeleton. The protein resides in the microtubule organizing center. It is found in the centrosome. It localises to the centriolar satellite. The BBSome complex is thought to function as a coat complex required for sorting of specific membrane proteins to the primary cilia. The BBSome complex is required for ciliogenesis but is dispensable for centriolar satellite function. This ciliogenic function is mediated in part by the Rab8 GDP/GTP exchange factor, which localizes to the basal body and contacts the BBSome. Rab8(GTP) enters the primary cilium and promotes extension of the ciliary membrane. Firstly the BBSome associates with the ciliary membrane and binds to RAB3IP/Rabin8, the guanosyl exchange factor (GEF) for Rab8 and then the Rab8-GTP localizes to the cilium and promotes docking and fusion of carrier vesicles to the base of the ciliary membrane. The BBSome complex, together with the LTZL1, controls SMO ciliary trafficking and contributes to the sonic hedgehog (SHH) pathway regulation. Required for proper BBSome complex assembly and its ciliary localization. This is BBSome complex member BBS2 from Homo sapiens (Human).